A 117-amino-acid polypeptide reads, in one-letter code: Large ribosomal subunit protein bL20 (117 aa).

Belongs to the bacterial ribosomal protein bL20 family.

In terms of biological role, binds directly to 23S ribosomal RNA and is necessary for the in vitro assembly process of the 50S ribosomal subunit. It is not involved in the protein synthesizing functions of that subunit. The protein is Large ribosomal subunit protein bL20 of Chromohalobacter salexigens (strain ATCC BAA-138 / DSM 3043 / CIP 106854 / NCIMB 13768 / 1H11).